The primary structure comprises 2201 residues: RNA-directed RNA polymerase L (2201 aa).

Positions 26 to 285 (KNIMLAQTQI…VCSKSVEYTF (260 aa)) are endonuclease. Mn(2+) is bound by residues Glu-51, Asp-88, and Glu-101. Residue Lys-114 is part of the active site. The RdRp catalytic domain maps to 1156–1352 (LDMKSVVRQS…FLSDRLNKFV (197 aa)). Position 1312 (Asp-1312) interacts with Mg(2+).

It belongs to the Bunyavirales RNA polymerase family. In terms of assembly, homomultimer; the oligomeric structure is essential for the polymerase activity. Interacts with nucleoprotein N. Interacts with protein Z; this interaction inhibits viral transcription and replication, Z partially blocks the product exit tunnel for the releasing nascent RNA product. Mn(2+) is required as a cofactor. The cofactor is Mg(2+).

Its subcellular location is the virion. It localises to the host cytoplasm. The enzyme catalyses RNA(n) + a ribonucleoside 5'-triphosphate = RNA(n+1) + diphosphate. Its function is as follows. RNA-dependent RNA polymerase, which is responsible for the replication and transcription of the viral RNA genome using antigenomic RNA as an intermediate. During transcription, synthesizes subgenomic RNAs and assures their capping by a cap-snatching mechanism, which involves the endonuclease activity cleaving the host capped pre-mRNAs. These short capped RNAs are then used as primers for viral transcription. The 3'-end of subgenomic mRNAs molecules are heterogeneous and not polyadenylated. The replicase function is to direct synthesis of antigenomic and genomic RNA which are encapsidated and non capped. As a consequence of the use of the same enzyme for both transcription and replication, these mechanisms need to be well coordinated. These processes may be regulated by proteins N and Z in a dose-dependent manner. Z protein inhibits the viral polymerase L und thus the viral transcription and RNA synthesis. The sequence is that of RNA-directed RNA polymerase L from Oecomys bicolor (Bicolored arboreal rice rat).